A 256-amino-acid chain; its full sequence is Thiazole synthase (256 aa).

Lysine 95 acts as the Schiff-base intermediate with DXP in catalysis. 1-deoxy-D-xylulose 5-phosphate contacts are provided by residues glycine 156, 182-183 (AG), and 204-205 (NT).

It belongs to the ThiG family. In terms of assembly, homotetramer. Forms heterodimers with either ThiH or ThiS.

It is found in the cytoplasm. The catalysed reaction is [ThiS sulfur-carrier protein]-C-terminal-Gly-aminoethanethioate + 2-iminoacetate + 1-deoxy-D-xylulose 5-phosphate = [ThiS sulfur-carrier protein]-C-terminal Gly-Gly + 2-[(2R,5Z)-2-carboxy-4-methylthiazol-5(2H)-ylidene]ethyl phosphate + 2 H2O + H(+). The protein operates within cofactor biosynthesis; thiamine diphosphate biosynthesis. Functionally, catalyzes the rearrangement of 1-deoxy-D-xylulose 5-phosphate (DXP) to produce the thiazole phosphate moiety of thiamine. Sulfur is provided by the thiocarboxylate moiety of the carrier protein ThiS. In vitro, sulfur can be provided by H(2)S. The sequence is that of Thiazole synthase from Escherichia fergusonii (strain ATCC 35469 / DSM 13698 / CCUG 18766 / IAM 14443 / JCM 21226 / LMG 7866 / NBRC 102419 / NCTC 12128 / CDC 0568-73).